Reading from the N-terminus, the 1942-residue chain is Probable helicase with zinc finger domain (1942 aa).

Residues 178–206 (SEEYTLCKRFLEQGICRYGAQCTSAHSQE) form a C3H1-type zinc finger. At Ser-248 the chain carries Phosphoserine. 668–675 (GPYGTGKT) lines the ATP pocket. The short motif at 794–797 (DEAA) is the DEAA box element. Residues 1117–1127 (SGSTNKQQQSP) are compositionally biased toward polar residues. The segment at 1117–1141 (SGSTNKQQQSPPKGKSLHHTQNDHF) is disordered. At Thr-1163 the chain carries Phosphothreonine. Arg-1245 is subject to Omega-N-methylarginine. 4 disordered regions span residues 1246–1345 (GSPI…INLP), 1386–1429 (NLPE…GPNN), 1527–1552 (QGSAPYPHHHHPHLQHLPQPPLGLHQ), and 1608–1637 (RQVQSRSPPAVPSPPSSTDHSSHFSNFNDN). Basic and acidic residues-rich tracts occupy residues 1268–1281 (HQEKDQHEQNRNGK) and 1292–1308 (NKIRTPEKKPTEPKQVD). The span at 1399–1412 (NQVVQQQSQLNQQP) shows a compositional bias: low complexity. Ser-1614 carries the post-translational modification Phosphoserine. The span at 1623–1636 (SSTDHSSHFSNFND) shows a compositional bias: low complexity. 4 positions are modified to phosphoserine: Ser-1645, Ser-1738, Ser-1741, and Ser-1766. 3 disordered regions span residues 1729 to 1779 (FHPL…TPQD), 1792 to 1843 (NQSS…PEDQ), and 1870 to 1942 (MPNK…SYFK). A compositionally biased stretch (low complexity) spans 1731–1745 (PLSSRTVSSSSLPSL). Composition is skewed to polar residues over residues 1761–1779 (RISSSSVQPCSEEVSTPQD) and 1792–1825 (NQSSFNFSSPESWVNTTSSTPYQNIPCNGSSRTA). Low complexity-rich tracts occupy residues 1876–1888 (AESANSSSPQSSA) and 1920–1942 (LSLFQELSLGSSSGSNGFYSYFK).

Belongs to the DNA2/NAM7 helicase family. As to quaternary structure, interacts with SMYD2. Interacts with POLR2A. Interacts with SMYD3; the interaction may bridge SMYD3 and RNA polymerase II. Expressed predominantly in thymus and brain. Expression is down-regulated in 28 of 95 tested cancer cell lines.

It is found in the nucleus. Functionally, may act as a helicase that plays a role in RNA metabolism in multiple tissues and organs within the developing embryo. In Homo sapiens (Human), this protein is Probable helicase with zinc finger domain (HELZ).